Consider the following 594-residue polypeptide: UvrABC system protein C (594 aa).

The 78-residue stretch at 14–91 (DSPGCYLHKD…IQENMPKYNI (78 aa)) folds into the GIY-YIG domain. A UVR domain is found at 196 to 231 (DKIIDDLRSKMLEASHNQEFERAAEYRDLISGIATM).

The protein belongs to the UvrC family. As to quaternary structure, interacts with UvrB in an incision complex.

The protein localises to the cytoplasm. The UvrABC repair system catalyzes the recognition and processing of DNA lesions. UvrC both incises the 5' and 3' sides of the lesion. The N-terminal half is responsible for the 3' incision and the C-terminal half is responsible for the 5' incision. In Streptococcus equi subsp. equi (strain 4047), this protein is UvrABC system protein C.